A 74-amino-acid chain; its full sequence is Molt-inhibiting hormone (74 aa).

Q1 carries the post-translational modification Pyrrolidone carboxylic acid. 3 cysteine pairs are disulfide-bonded: C7/C43, C23/C39, and C26/C52. Position 72 is a valine amide (V72).

Its subcellular location is the secreted. Inhibits Y-organs where molting hormone (ecdysteroid) is secreted. A molting cycle is initiated when MIH secretion diminishes or stops. The sequence is that of Molt-inhibiting hormone from Procambarus bouvieri (Mexican crayfish).